The chain runs to 197 residues: Nucleoside triphosphate pyrophosphatase (197 aa).

Asp-71 acts as the Proton acceptor in catalysis.

It belongs to the Maf family. Requires a divalent metal cation as cofactor.

The protein localises to the cytoplasm. The enzyme catalyses a ribonucleoside 5'-triphosphate + H2O = a ribonucleoside 5'-phosphate + diphosphate + H(+). It catalyses the reaction a 2'-deoxyribonucleoside 5'-triphosphate + H2O = a 2'-deoxyribonucleoside 5'-phosphate + diphosphate + H(+). In terms of biological role, nucleoside triphosphate pyrophosphatase. May have a dual role in cell division arrest and in preventing the incorporation of modified nucleotides into cellular nucleic acids. This Synechococcus sp. (strain JA-3-3Ab) (Cyanobacteria bacterium Yellowstone A-Prime) protein is Nucleoside triphosphate pyrophosphatase.